The chain runs to 1013 residues: Probable outer membrane protein PmpG (1013 aa).

An N-terminal signal peptide occupies residues 1 to 27 (MQTSFHKFFLSMILAYSCCSLSGGGYA). The region spanning 733–1013 (GRSYCRGLWV…GLSAGSKVRF (281 aa)) is the Autotransporter domain.

It belongs to the PMP outer membrane protein family.

The protein resides in the secreted. Its subcellular location is the cell wall. The protein localises to the cell outer membrane. This Chlamydia trachomatis serovar D (strain ATCC VR-885 / DSM 19411 / UW-3/Cx) protein is Probable outer membrane protein PmpG (pmpG).